We begin with the raw amino-acid sequence, 318 residues long: Electron transfer flavoprotein subunit alpha (318 aa).

Residue 257 to 285 (LYIALGISGAIQHRAGMQTSKTIVAVNKD) coordinates FAD.

Belongs to the ETF alpha-subunit/FixB family. Heterodimer of an alpha and a beta subunit. The cofactor is FAD.

The electron transfer flavoprotein serves as a specific electron acceptor for other dehydrogenases. It transfers the electrons to the main respiratory chain via ETF-ubiquinone oxidoreductase (ETF dehydrogenase). The polypeptide is Electron transfer flavoprotein subunit alpha (etfA) (Mycobacterium leprae (strain TN)).